Reading from the N-terminus, the 344-residue chain is Phenylalanine--tRNA ligase alpha subunit (344 aa).

A Mg(2+)-binding site is contributed by glutamate 256.

It belongs to the class-II aminoacyl-tRNA synthetase family. Phe-tRNA synthetase alpha subunit type 1 subfamily. As to quaternary structure, tetramer of two alpha and two beta subunits. The cofactor is Mg(2+).

The protein localises to the cytoplasm. It catalyses the reaction tRNA(Phe) + L-phenylalanine + ATP = L-phenylalanyl-tRNA(Phe) + AMP + diphosphate + H(+). In Bacillus licheniformis (strain ATCC 14580 / DSM 13 / JCM 2505 / CCUG 7422 / NBRC 12200 / NCIMB 9375 / NCTC 10341 / NRRL NRS-1264 / Gibson 46), this protein is Phenylalanine--tRNA ligase alpha subunit.